The sequence spans 424 residues: GDP-fucose protein O-fucosyltransferase 2 (424 aa).

The signal sequence occupies residues 1 to 20 (MHFFPIQLLVLFFAEKIAFA). 51-55 (GEGFN) contributes to the GDP-beta-L-fucose binding site. Catalysis depends on glutamate 52, which acts as the Proton acceptor. Residues cysteine 154 and cysteine 187 are joined by a disulfide bond. Asparagine 205 is a glycosylation site (N-linked (GlcNAc...) asparagine). Residues 288–290 (HWR), aspartate 366, and 383–384 (TF) each bind GDP-beta-L-fucose. Cysteine 407 and cysteine 414 are joined by a disulfide.

The protein belongs to the glycosyltransferase 68 family. Expressed in the anterior part of embryos, in the hypodermal and neuronal cells of the head. Expressed at different levels in a variety of cell types after hatching, including neuronal, hypodermal, muscle, intestinal, and somatic gonadal cells. Expressed in the nerve ring around the pharynx, in dorsal and ventral nerve cords, intestine, and a variety of hypodermal cells of L1-L3 larvae. Expressed in gonadal sheath cells, spermatheca, and tissues surrounding the vulva of adult hermaphrodites, and in the body wall muscle and hypodermal cells of adults of both sexes.

The protein localises to the endoplasmic reticulum. It localises to the golgi apparatus. The enzyme catalyses L-seryl-[protein] + GDP-beta-L-fucose = 3-O-(alpha-L-fucosyl)-L-seryl-[protein] + GDP + H(+). It catalyses the reaction L-threonyl-[protein] + GDP-beta-L-fucose = 3-O-(alpha-L-fucosyl)-L-threonyl-[protein] + GDP + H(+). Its pathway is protein modification; protein glycosylation. In terms of biological role, catalyzes the reaction that attaches fucose through an O-glycosidic linkage to a conserved serine or threonine residue in the consensus sequence C1-X-X-S/T-C2 of thrombospondin type I repeats (TSRs) where C1 and C2 are the first and second cysteines of the repeat, respectively. O-fucosylates members of several protein families including the ADAMTS superfamily and the thrombospondin (TSP) and spondin families. The polypeptide is GDP-fucose protein O-fucosyltransferase 2 (pad-2) (Caenorhabditis elegans).